The sequence spans 451 residues: D-inositol 3-phosphate glycosyltransferase (451 aa).

Residue His21 coordinates 1D-myo-inositol 3-phosphate. Residues 27-28 (QP) and Gly35 each bind UDP-N-acetyl-alpha-D-glucosamine. Residues 32 to 37 (DAGGMN), Lys90, Tyr123, Thr147, and Arg167 each bind 1D-myo-inositol 3-phosphate. UDP-N-acetyl-alpha-D-glucosamine contacts are provided by Arg241, Lys246, and Gln305. Residues Tyr314, Arg315, and Ala317 each contribute to the Mg(2+) site. Residues Glu327 and Glu335 each contribute to the UDP-N-acetyl-alpha-D-glucosamine site. Thr341 provides a ligand contact to Mg(2+).

It belongs to the glycosyltransferase group 1 family. MshA subfamily. Homodimer.

The enzyme catalyses 1D-myo-inositol 3-phosphate + UDP-N-acetyl-alpha-D-glucosamine = 1D-myo-inositol 2-acetamido-2-deoxy-alpha-D-glucopyranoside 3-phosphate + UDP + H(+). In terms of biological role, catalyzes the transfer of a N-acetyl-glucosamine moiety to 1D-myo-inositol 3-phosphate to produce 1D-myo-inositol 2-acetamido-2-deoxy-glucopyranoside 3-phosphate in the mycothiol biosynthesis pathway. This is D-inositol 3-phosphate glycosyltransferase from Nocardia farcinica (strain IFM 10152).